The chain runs to 181 residues: ATP synthase subunit delta (181 aa).

The protein belongs to the ATPase delta chain family. In terms of assembly, F-type ATPases have 2 components, F(1) - the catalytic core - and F(0) - the membrane proton channel. F(1) has five subunits: alpha(3), beta(3), gamma(1), delta(1), epsilon(1). F(0) has three main subunits: a(1), b(2) and c(10-14). The alpha and beta chains form an alternating ring which encloses part of the gamma chain. F(1) is attached to F(0) by a central stalk formed by the gamma and epsilon chains, while a peripheral stalk is formed by the delta and b chains.

It localises to the cell membrane. Its function is as follows. F(1)F(0) ATP synthase produces ATP from ADP in the presence of a proton or sodium gradient. F-type ATPases consist of two structural domains, F(1) containing the extramembraneous catalytic core and F(0) containing the membrane proton channel, linked together by a central stalk and a peripheral stalk. During catalysis, ATP synthesis in the catalytic domain of F(1) is coupled via a rotary mechanism of the central stalk subunits to proton translocation. In terms of biological role, this protein is part of the stalk that links CF(0) to CF(1). It either transmits conformational changes from CF(0) to CF(1) or is implicated in proton conduction. This is ATP synthase subunit delta from Lacticaseibacillus paracasei (strain ATCC 334 / BCRC 17002 / CCUG 31169 / CIP 107868 / KCTC 3260 / NRRL B-441) (Lactobacillus paracasei).